The following is a 410-amino-acid chain: Adenosylhomocysteinase (410 aa).

Substrate contacts are provided by D117 and E142. NAD(+) is bound at residue 143 to 145; sequence TTT. 2 residues coordinate substrate: K172 and D176. NAD(+) is bound by residues N177, 206-211, E229, 285-287, and N332; these read GYGYCG and AGH.

This sequence belongs to the adenosylhomocysteinase family. The cofactor is NAD(+).

It is found in the cytoplasm. It catalyses the reaction S-adenosyl-L-homocysteine + H2O = L-homocysteine + adenosine. It participates in amino-acid biosynthesis; L-homocysteine biosynthesis; L-homocysteine from S-adenosyl-L-homocysteine: step 1/1. In terms of biological role, may play a key role in the regulation of the intracellular concentration of adenosylhomocysteine. This is Adenosylhomocysteinase from Thermoplasma volcanium (strain ATCC 51530 / DSM 4299 / JCM 9571 / NBRC 15438 / GSS1).